We begin with the raw amino-acid sequence, 369 residues long: Anhydro-N-acetylmuramic acid kinase (369 aa).

12–19 (GTSMDGVD) is a binding site for ATP.

The protein belongs to the anhydro-N-acetylmuramic acid kinase family.

The enzyme catalyses 1,6-anhydro-N-acetyl-beta-muramate + ATP + H2O = N-acetyl-D-muramate 6-phosphate + ADP + H(+). It functions in the pathway amino-sugar metabolism; 1,6-anhydro-N-acetylmuramate degradation. The protein operates within cell wall biogenesis; peptidoglycan recycling. Catalyzes the specific phosphorylation of 1,6-anhydro-N-acetylmuramic acid (anhMurNAc) with the simultaneous cleavage of the 1,6-anhydro ring, generating MurNAc-6-P. Is required for the utilization of anhMurNAc either imported from the medium or derived from its own cell wall murein, and thus plays a role in cell wall recycling. This chain is Anhydro-N-acetylmuramic acid kinase, found in Shewanella woodyi (strain ATCC 51908 / MS32).